Here is a 104-residue protein sequence, read N- to C-terminus: COX assembly mitochondrial protein 1 (104 aa).

The CHCH domain occupies 10-52 (QKQCADLIRALEECHKSFGKFFGECNTIKYELKACLTKDRNDK). Short sequence motifs (cx9C motif) lie at residues 13–23 (CADLIRALEEC) and 34–44 (CNTIKYELKAC). Intrachain disulfides connect Cys13/Cys44 and Cys23/Cys34.

This sequence belongs to the CMC family.

Its subcellular location is the mitochondrion inner membrane. Its function is as follows. Required for mitochondrial cytochrome c oxidase (COX) assembly and respiration. In Schizosaccharomyces pombe (strain 972 / ATCC 24843) (Fission yeast), this protein is COX assembly mitochondrial protein 1 (cmc1).